We begin with the raw amino-acid sequence, 122 residues long: Large ribosomal subunit protein uL14c (122 aa).

The protein belongs to the universal ribosomal protein uL14 family. In terms of assembly, part of the 50S ribosomal subunit.

Its subcellular location is the plastid. It is found in the chloroplast. In terms of biological role, binds to 23S rRNA. In Phalaenopsis aphrodite subsp. formosana (Moth orchid), this protein is Large ribosomal subunit protein uL14c.